The chain runs to 474 residues: L-lactate permease (474 aa).

A run of 11 helical transmembrane segments spans residues 4–21 (AILA…LAVF), 28–48 (ACFI…HFSI), 63–85 (FWPI…ASGG), 105–127 (LILA…AVAI), 142–164 (AALI…LPVT), 177–199 (LSVI…LVSL), 209–231 (GVFG…VSNY), 238–255 (SIIG…FVNL), 281–303 (FILV…QLLA), 324–346 (WLTS…QGMS), and 387–409 (IAVS…IGTL).

It belongs to the lactate permease family.

The protein localises to the cell membrane. Its function is as follows. Plays a role in L-lactate utilization. The protein is L-lactate permease (lctP) of Streptococcus iniae (Streptococcus shiloi).